Reading from the N-terminus, the 85-residue chain is Small ribosomal subunit protein bS20 (85 aa).

Belongs to the bacterial ribosomal protein bS20 family.

Binds directly to 16S ribosomal RNA. The sequence is that of Small ribosomal subunit protein bS20 from Borrelia hermsii (strain HS1 / DAH).